Here is a 156-residue protein sequence, read N- to C-terminus: Cyclic pyranopterin monophosphate synthase (156 aa).

Residues 73 to 75 (LCH) and 110 to 111 (ME) each bind substrate. Residue Asp-125 is part of the active site.

Belongs to the MoaC family. In terms of assembly, homohexamer; trimer of dimers.

It carries out the reaction (8S)-3',8-cyclo-7,8-dihydroguanosine 5'-triphosphate = cyclic pyranopterin phosphate + diphosphate. It participates in cofactor biosynthesis; molybdopterin biosynthesis. Catalyzes the conversion of (8S)-3',8-cyclo-7,8-dihydroguanosine 5'-triphosphate to cyclic pyranopterin monophosphate (cPMP). The chain is Cyclic pyranopterin monophosphate synthase from Pseudomonas putida (strain W619).